Here is a 376-residue protein sequence, read N- to C-terminus: Chaperone protein DnaJ 2 (376 aa).

Residues 8–72 (DYYEILGVPR…EKRKLYDMYG (65 aa)) form the J domain. Residues 143–219 (GTTVPIEVER…CTGRGYGLVK (77 aa)) form a CR-type zinc finger. Zn(2+) is bound by residues C156, C159, C172, C175, C194, C197, C207, and C210. 4 CXXCXGXG motif repeats span residues 156–163 (CSACGGTG), 172–179 (CPTCGGRG), 194–201 (CPTCGGEG), and 207–214 (CHACTGRG).

The protein belongs to the DnaJ family. As to quaternary structure, homodimer. Requires Zn(2+) as cofactor.

It localises to the cytoplasm. In terms of biological role, participates actively in the response to hyperosmotic and heat shock by preventing the aggregation of stress-denatured proteins and by disaggregating proteins, also in an autonomous, DnaK-independent fashion. Unfolded proteins bind initially to DnaJ; upon interaction with the DnaJ-bound protein, DnaK hydrolyzes its bound ATP, resulting in the formation of a stable complex. GrpE releases ADP from DnaK; ATP binding to DnaK triggers the release of the substrate protein, thus completing the reaction cycle. Several rounds of ATP-dependent interactions between DnaJ, DnaK and GrpE are required for fully efficient folding. Also involved, together with DnaK and GrpE, in the DNA replication of plasmids through activation of initiation proteins. The chain is Chaperone protein DnaJ 2 from Aquifex aeolicus (strain VF5).